A 114-amino-acid polypeptide reads, in one-letter code: DNA polymerase epsilon subunit C (114 aa).

Positions 91-114 (PDAVAPATGEEEQPKRRGRKPAQE) are disordered.

As to quaternary structure, heterotetramer. Consists of four subunits: POL2, DPB2, DPB3 and DPB4.

The protein resides in the nucleus. In terms of biological role, as accessory component of the DNA polymerase epsilon (DNA polymerase II) participates in chromosomal DNA replication. The chain is DNA polymerase epsilon subunit C (DPB3) from Yarrowia lipolytica (strain CLIB 122 / E 150) (Yeast).